Consider the following 346-residue polypeptide: Sensor protein kinase GraS (346 aa).

2 helical membrane-spanning segments follow: residues 15–35 and 43–63; these read MNWI…SLID and LFYI…LTYF. In terms of domain architecture, Histidine kinase spans 126 to 332; sequence EFVHDIKTPV…TVRLIFPLQN (207 aa).

In terms of assembly, interacts with GraX.

The protein localises to the cell membrane. The catalysed reaction is ATP + protein L-histidine = ADP + protein N-phospho-L-histidine.. Functionally, member of the two-component regulatory system GraR/GraS involved in resistance against cationic antimicrobial peptides (CAMPs). Functions as a sensor protein kinase which phosphorylates GraR through the auxiliary protein GraX. In turn, GraR up-regulates many genes such as adhesins, exoproteins, transporters, toxins, and proteins involved in cell wall synthesis. Down-regulates the expression of many genes involved in RNA and amino acid synthesis or glycolysis. In Staphylococcus aureus (strain MSSA476), this protein is Sensor protein kinase GraS (graS).